The sequence spans 334 residues: Uroporphyrinogen decarboxylase (334 aa).

Residues 22 to 26, aspartate 71, tyrosine 140, serine 195, and histidine 310 contribute to the substrate site; that span reads RQVGR.

It belongs to the uroporphyrinogen decarboxylase family. Homodimer.

It localises to the cytoplasm. The catalysed reaction is uroporphyrinogen III + 4 H(+) = coproporphyrinogen III + 4 CO2. It participates in porphyrin-containing compound metabolism; protoporphyrin-IX biosynthesis; coproporphyrinogen-III from 5-aminolevulinate: step 4/4. Functionally, catalyzes the decarboxylation of four acetate groups of uroporphyrinogen-III to yield coproporphyrinogen-III. The protein is Uroporphyrinogen decarboxylase of Chlamydia muridarum (strain MoPn / Nigg).